The chain runs to 383 residues: MNHSKTLLLTAAAGLMLTCGAVSSQAKHKLSDPYHFTVNAAAETEPVDTAGDAADDPAIWLDPKTPQNSKLITTNKKSGLVVYSLDGKMLHSYNTGKLNNVDIRYDFPLNGKKVDIAAASNRSEGKNTIEIYAIDGKNGTLQSMTDPDHPIATAINEVYGFTLYHSQKTGKYYAMVTGKEGEFEQYELKADKNGYISGKKVRAFKMNSQTEGMAADDEYGRLYIAEEDEAIWKFSAEPDGGSNGTVIDRADGRHLTRDIEGLTIYYAADGKGYLMASSQGNSSYAIYDRQGKNKYVADFRITDGPETDGTSDTDGIDVLGFGLGPEYPFGIFVAQDGENIDHGQKANQNFKIVPWERIADQIGFRPLANEQVDPRKLTDRSGK.

An N-terminal signal peptide occupies residues M1–A26. Residues K27–K29 constitute a propeptide that is removed on maturation. The BPP domain maps to L30–I362.

Requires Ca(2+) as cofactor.

It localises to the secreted. The catalysed reaction is 1D-myo-inositol hexakisphosphate + H2O = 1D-myo-inositol 1,2,4,5,6-pentakisphosphate + phosphate. Functionally, catalyzes the hydrolysis of inorganic orthophosphate from phytate. Only phytate, ADP, and ATP were hydrolyzed (100, 75, and 50% of the relative activity, respectively). The sequence is that of 3-phytase (phyC) from Bacillus subtilis.